We begin with the raw amino-acid sequence, 230 residues long: Probable septum site-determining protein MinC (230 aa).

It belongs to the MinC family. Interacts with MinD and FtsZ.

Functionally, cell division inhibitor that blocks the formation of polar Z ring septums. Rapidly oscillates between the poles of the cell to destabilize FtsZ filaments that have formed before they mature into polar Z rings. Prevents FtsZ polymerization. In Rhodopseudomonas palustris (strain BisA53), this protein is Probable septum site-determining protein MinC.